The chain runs to 242 residues: Biosynthetic peptidoglycan transglycosylase (242 aa).

A helical membrane pass occupies residues 19-39 (LMVVLAVFWGGGIALFSVAPV).

The protein belongs to the glycosyltransferase 51 family.

The protein resides in the cell inner membrane. It catalyses the reaction [GlcNAc-(1-&gt;4)-Mur2Ac(oyl-L-Ala-gamma-D-Glu-L-Lys-D-Ala-D-Ala)](n)-di-trans,octa-cis-undecaprenyl diphosphate + beta-D-GlcNAc-(1-&gt;4)-Mur2Ac(oyl-L-Ala-gamma-D-Glu-L-Lys-D-Ala-D-Ala)-di-trans,octa-cis-undecaprenyl diphosphate = [GlcNAc-(1-&gt;4)-Mur2Ac(oyl-L-Ala-gamma-D-Glu-L-Lys-D-Ala-D-Ala)](n+1)-di-trans,octa-cis-undecaprenyl diphosphate + di-trans,octa-cis-undecaprenyl diphosphate + H(+). The protein operates within cell wall biogenesis; peptidoglycan biosynthesis. Functionally, peptidoglycan polymerase that catalyzes glycan chain elongation from lipid-linked precursors. The sequence is that of Biosynthetic peptidoglycan transglycosylase from Escherichia coli O157:H7.